Here is a 369-residue protein sequence, read N- to C-terminus: Ribonuclease D (369 aa).

The region spanning 1-166 (MITTNDALAA…PIAHKLMEQV (166 aa)) is the 3'-5' exonuclease domain. The HRDC domain maps to 206-285 (RPRQLACLKL…AQAQALLEDA (80 aa)).

It belongs to the RNase D family. It depends on a divalent metal cation as a cofactor.

The protein resides in the cytoplasm. The catalysed reaction is Exonucleolytic cleavage that removes extra residues from the 3'-terminus of tRNA to produce 5'-mononucleotides.. Its function is as follows. Exonuclease involved in the 3' processing of various precursor tRNAs. Initiates hydrolysis at the 3'-terminus of an RNA molecule and releases 5'-mononucleotides. The sequence is that of Ribonuclease D from Cronobacter turicensis (strain DSM 18703 / CCUG 55852 / LMG 23827 / z3032).